The sequence spans 363 residues: GTPase Obg (363 aa).

The Obg domain maps to 1–159 (MKFLDEAKVY…KTIWLRLKLI (159 aa)). Residues 160-327 (ADAGLVGLPN…VLRALRDIIV (168 aa)) form the OBG-type G domain. GTP contacts are provided by residues 166 to 173 (GLPNAGKS), 191 to 195 (FTTLH), 212 to 215 (DIPG), 279 to 282 (SQID), and 308 to 310 (SAV). Positions 173 and 193 each coordinate Mg(2+). Residues 332 to 363 (EEKPAKAPKLRHRDMIVSEENNQGEDGADDQP) are disordered. Residues 353 to 363 (NQGEDGADDQP) are compositionally biased toward acidic residues.

This sequence belongs to the TRAFAC class OBG-HflX-like GTPase superfamily. OBG GTPase family. As to quaternary structure, monomer. Mg(2+) serves as cofactor.

Its subcellular location is the cytoplasm. Its function is as follows. An essential GTPase which binds GTP, GDP and possibly (p)ppGpp with moderate affinity, with high nucleotide exchange rates and a fairly low GTP hydrolysis rate. Plays a role in control of the cell cycle, stress response, ribosome biogenesis and in those bacteria that undergo differentiation, in morphogenesis control. This is GTPase Obg from Rhizobium etli (strain ATCC 51251 / DSM 11541 / JCM 21823 / NBRC 15573 / CFN 42).